Here is a 133-residue protein sequence, read N- to C-terminus: Type VI secretion amidase effector 2 protein (133 aa).

Residues Cys-23 and His-73 contribute to the active site.

The protein belongs to the cell wall amidase Dae2/Tae2-like family.

Its subcellular location is the host periplasm. The protein localises to the secreted. It participates in cell wall degradation; peptidoglycan degradation. Functionally, toxic component of a contact-dependent interbacterial competition system (also called effector-immunity systems). Secreted by the SPI-6 type VI secretion system, probably into the periplasm of bacterial target cells. A cell wall amidase with specificity toward the D-meso-DAP-D-alanine bond (D-meso-diaminopimelic-D-alanine) found in peptidoglycan of Gram-negative bacteria. Toxicity is counteracted by a cognate immunity protein Tai2 (t2585), but not immunity proteins associated with a similar endopeptidase in other bacteria. In vitro degrades peptidoglycans from Gram-negative but not Gram-positive bacteria. This is Type VI secretion amidase effector 2 protein from Salmonella typhi.